A 174-amino-acid chain; its full sequence is Inactive protein RESTRICTED TEV MOVEMENT 1 (174 aa).

Residues 1-152 (MKIGPVGKHD…LQYIGVYLRP (152 aa)) form the Jacalin-type lectin domain.

The protein belongs to the jacalin lectin family. As to quaternary structure, self-interacts. Interacts with RTM3.

It localises to the cytoplasm. Unable to mediate restriction of long-distance movement of the pathogenic tobacco etch virus (TEV) without causing a hypersensitive response or inducing systemic acquired resistance. This Arabidopsis thaliana (Mouse-ear cress) protein is Inactive protein RESTRICTED TEV MOVEMENT 1 (RTM1).